Reading from the N-terminus, the 573-residue chain is Urease subunit alpha (573 aa).

Residues 136–573 (GAIDCHVHLI…LPMAQRYFLF (438 aa)) enclose the Urease domain. Ni(2+) contacts are provided by His141, His143, and Lys224. Lys224 carries the post-translational modification N6-carboxylysine. His226 is a binding site for substrate. His253 and His279 together coordinate Ni(2+). The active-site Proton donor is the His327. Asp367 is a binding site for Ni(2+).

It belongs to the metallo-dependent hydrolases superfamily. Urease alpha subunit family. In terms of assembly, heterotrimer of UreA (gamma), UreB (beta) and UreC (alpha) subunits. Three heterotrimers associate to form the active enzyme. Ni cation is required as a cofactor. Post-translationally, carboxylation allows a single lysine to coordinate two nickel ions.

It localises to the cytoplasm. It catalyses the reaction urea + 2 H2O + H(+) = hydrogencarbonate + 2 NH4(+). It functions in the pathway nitrogen metabolism; urea degradation; CO(2) and NH(3) from urea (urease route): step 1/1. The chain is Urease subunit alpha from Mycobacterium sp. (strain JLS).